A 76-amino-acid polypeptide reads, in one-letter code: Gallerimycin (76 aa).

An N-terminal signal peptide occupies residues 1-19 (MKIAFIVAISLAFLAVTSC).

Belongs to the invertebrate defensin family.

Its function is as follows. Has antifungal activity against the entomopathogenic fungus M.nisopliae, but does not display any antifungal activity against S.cerevisiae nor any antimicrobial activity against M.luteus, B.subtilis, and E.coli. This chain is Gallerimycin (LOC113523440), found in Galleria mellonella (Greater wax moth).